Reading from the N-terminus, the 124-residue chain is Small polypeptide ROTUNDIFOLIA LIKE 3 (124 aa).

The interval 1-23 is disordered; the sequence is MEDERWKLSSSKGRSKSGRSCSS. Asparagine 35 and asparagine 38 each carry an N-linked (GlcNAc...) asparagine glycan. The helical transmembrane segment at 59-75 threads the bilayer; it reads AWSAAGAGGGGASSSSS. The segment at 60–95 is disordered; it reads WSAAGAGGGGASSSSSSQHQHQQQQQQSNNSQRLSK. Residues 71 to 91 are compositionally biased toward low complexity; it reads SSSSSSQHQHQQQQQQSNNSQ. Residue asparagine 88 is glycosylated (N-linked (GlcNAc...) asparagine). Residues 92-124 are required for DVL/RTFL small polypeptide activity; sequence RLSKKCVEAVKEHRARFYIVRRCVSMLVCWRDY.

Belongs to the DVL/RTFL small polypeptides family.

Its subcellular location is the cell membrane. Its function is as follows. Small polypeptide acting as a regulatory molecule which coordinates cellular responses required for differentiation, growth and development, probably by restricting polar cell proliferation in lateral organs (e.g. leaves and petioles). The protein is Small polypeptide ROTUNDIFOLIA LIKE 3 of Oryza sativa subsp. japonica (Rice).